The chain runs to 103 residues: MERIRLKLKAYDHRVLDRTVAAIVEAVKRTGADVRGPVPMPTKIKRYTVLKSPHVNKDSREQFEMRIHARMLDIVAATPDTVDSLTKLDLAPEVNVEVRAMGK.

It belongs to the universal ribosomal protein uS10 family. In terms of assembly, part of the 30S ribosomal subunit.

Involved in the binding of tRNA to the ribosomes. The protein is Small ribosomal subunit protein uS10 of Campylobacter fetus subsp. fetus (strain 82-40).